Consider the following 518-residue polypeptide: Adenine deaminase (518 aa).

This sequence belongs to the metallo-dependent hydrolases superfamily. Adenine deaminase family. It depends on Mn(2+) as a cofactor.

The catalysed reaction is adenine + H2O + H(+) = hypoxanthine + NH4(+). This is Adenine deaminase from Methanoculleus marisnigri (strain ATCC 35101 / DSM 1498 / JR1).